A 543-amino-acid polypeptide reads, in one-letter code: Zinc metalloproteinase (543 aa).

The N-terminal stretch at 1 to 24 is a signal peptide; sequence MHPNYYLSPLAVAIALGIASPVKA. Residues 25-207 constitute a propeptide that is removed on maturation; the sequence is ADPIPLQKSS…PFVQWDDVKT (183 aa). Position 377 (histidine 377) interacts with Zn(2+). Residue glutamate 378 is part of the active site. Zn(2+)-binding residues include histidine 381 and glutamate 401. The active-site Proton donor is histidine 463.

Belongs to the peptidase M4 family. Zn(2+) serves as cofactor.

It localises to the secreted. Functionally, cleaves collagen, gelatin, casein, alpha-1-antitrypsin, and bovine insulin. May play a role in the pathogenesis of legionnaires disease. This chain is Zinc metalloproteinase, found in Legionella pneumophila.